Reading from the N-terminus, the 356-residue chain is GTPase Obg (356 aa).

Positions 1 to 159 (MKFIDRVKIH…RWLRLELKLL (159 aa)) constitute an Obg domain. Residues 160–331 (ADVGLLGMPN…LVAEVARELE (172 aa)) enclose the OBG-type G domain. GTP-binding positions include 166 to 173 (GMPNAGKS), 191 to 195 (FTTLV), 213 to 216 (DIPG), 283 to 286 (SKID), and 312 to 314 (SAV). Residues Ser173 and Thr193 each coordinate Mg(2+).

It belongs to the TRAFAC class OBG-HflX-like GTPase superfamily. OBG GTPase family. As to quaternary structure, monomer. It depends on Mg(2+) as a cofactor.

It localises to the cytoplasm. Its function is as follows. An essential GTPase which binds GTP, GDP and possibly (p)ppGpp with moderate affinity, with high nucleotide exchange rates and a fairly low GTP hydrolysis rate. Plays a role in control of the cell cycle, stress response, ribosome biogenesis and in those bacteria that undergo differentiation, in morphogenesis control. The sequence is that of GTPase Obg from Syntrophotalea carbinolica (strain DSM 2380 / NBRC 103641 / GraBd1) (Pelobacter carbinolicus).